The chain runs to 192 residues: Fe/S biogenesis protein NfuA (192 aa).

Residues C149 and C152 each coordinate [4Fe-4S] cluster.

This sequence belongs to the NfuA family. Homodimer. [4Fe-4S] cluster is required as a cofactor.

Functionally, involved in iron-sulfur cluster biogenesis. Binds a 4Fe-4S cluster, can transfer this cluster to apoproteins, and thereby intervenes in the maturation of Fe/S proteins. Could also act as a scaffold/chaperone for damaged Fe/S proteins. This is Fe/S biogenesis protein NfuA from Shewanella piezotolerans (strain WP3 / JCM 13877).